Here is a 256-residue protein sequence, read N- to C-terminus: MNKLLIIDGMNLVRRIHAAQPNESDITGLKERVHGACRKLLKYHIPTHAAIVWDGDAISWRKTLFPDYKKGRKPMPEALANGLNDIKAYLAEHHIHSVDADSEADDVIATLATKLVNIDGEAIIVSTDKGFSQLNHPKIKLWDHFNQTYLTIEEMEKKLGIERSQLIDYLALAGDSGNKIPGVPGIGPKSAVELLRIYRSLASIYNSIDKVGAKQAKKLEAGKQMARLSYKLVQLKTDMPLSVNLKQFRIKKPDSE.

Residue Asp-105 participates in Mg(2+) binding. A 5'-3' exonuclease domain is found at 163–256 (RSQLIDYLAL…QFRIKKPDSE (94 aa)). Leu-172, Ala-173, Pro-181, Val-183, and Ile-186 together coordinate K(+). Positions 185–190 (GIGPKS) are interaction with DNA.

The protein belongs to the Xni family. It depends on Mg(2+) as a cofactor. K(+) serves as cofactor.

In terms of biological role, has flap endonuclease activity. During DNA replication, flap endonucleases cleave the 5'-overhanging flap structure that is generated by displacement synthesis when DNA polymerase encounters the 5'-end of a downstream Okazaki fragment. The sequence is that of Flap endonuclease Xni from Shewanella pealeana (strain ATCC 700345 / ANG-SQ1).